The following is a 505-amino-acid chain: ATP synthase subunit alpha (505 aa).

170–177 (GDRQTGKT) is a binding site for ATP.

Belongs to the ATPase alpha/beta chains family. As to quaternary structure, F-type ATPases have 2 components, CF(1) - the catalytic core - and CF(0) - the membrane proton channel. CF(1) has five subunits: alpha(3), beta(3), gamma(1), delta(1), epsilon(1). CF(0) has four main subunits: a(1), b(1), b'(1) and c(9-12).

The protein localises to the cellular thylakoid membrane. The enzyme catalyses ATP + H2O + 4 H(+)(in) = ADP + phosphate + 5 H(+)(out). Produces ATP from ADP in the presence of a proton gradient across the membrane. The alpha chain is a regulatory subunit. This chain is ATP synthase subunit alpha, found in Synechococcus elongatus (strain ATCC 33912 / PCC 7942 / FACHB-805) (Anacystis nidulans R2).